A 25-amino-acid chain; its full sequence is Gamma-conotoxin PiVIIA (25 aa).

Disulfide bonds link Cys-1–Cys-15, Cys-8–Cys-19, and Cys-14–Cys-24. 4-hydroxyproline is present on Pro-4. Glu-13 and Glu-20 each carry 4-carboxyglutamate.

Belongs to the conotoxin O2 superfamily. As to expression, expressed by the venom duct.

Its subcellular location is the secreted. Its function is as follows. Micromolar concentrations of PiVIIA increase the magnitude of the macroscopic calcium current in DRG neurons from rat. An increase, even modest of the calcium current, may have a significant impact in the excitability and electrical activity of neurons, and may set up PiVIIA as a member of the pharmacological family of the gamma-conotoxins. The chain is Gamma-conotoxin PiVIIA from Conus princeps (Prince cone).